The following is a 276-amino-acid chain: Octanoyltransferase LipM (276 aa).

Positions 32-247 (GEVAPTLRFY…GFEDALQLTF (216 aa)) constitute a BPL/LPL catalytic domain. The active-site Acyl-thioester intermediate is Cys149.

The protein belongs to the octanoyltransferase LipM family. In terms of assembly, monomer.

It carries out the reaction octanoyl-[ACP] + L-lysyl-[protein] = N(6)-octanoyl-L-lysyl-[protein] + holo-[ACP] + H(+). Its pathway is protein modification; protein lipoylation via endogenous pathway; protein N(6)-(lipoyl)lysine from octanoyl-[acyl-carrier-protein]. Catalyzes the transfer of endogenously produced octanoic acid from octanoyl-acyl-carrier-protein onto the lipoyl domain of GcvH, an intermediate carrier during protein lipoylation. In Exiguobacterium sibiricum (strain DSM 17290 / CCUG 55495 / CIP 109462 / JCM 13490 / 255-15), this protein is Octanoyltransferase LipM.